The primary structure comprises 506 residues: 2-isopropylmalate synthase (506 aa).

The Pyruvate carboxyltransferase domain maps to 4–266; sequence ILFMDTTLRD…EPSITLKEIK (263 aa). Mn(2+)-binding residues include Asp-13, His-201, His-203, and Asn-237. The segment at 390 to 506 is regulatory domain; it reads NITQLQVHFV…KLKSFIQLVK (117 aa).

Belongs to the alpha-IPM synthase/homocitrate synthase family. LeuA type 1 subfamily. Homodimer. Mn(2+) is required as a cofactor.

Its subcellular location is the cytoplasm. The catalysed reaction is 3-methyl-2-oxobutanoate + acetyl-CoA + H2O = (2S)-2-isopropylmalate + CoA + H(+). Its pathway is amino-acid biosynthesis; L-leucine biosynthesis; L-leucine from 3-methyl-2-oxobutanoate: step 1/4. Its function is as follows. Catalyzes the condensation of the acetyl group of acetyl-CoA with 3-methyl-2-oxobutanoate (2-ketoisovalerate) to form 3-carboxy-3-hydroxy-4-methylpentanoate (2-isopropylmalate). In Bacillus thuringiensis subsp. konkukian (strain 97-27), this protein is 2-isopropylmalate synthase.